Here is a 900-residue protein sequence, read N- to C-terminus: Alanine--tRNA ligase (900 aa).

Positions 568, 572, 672, and 676 each coordinate Zn(2+).

This sequence belongs to the class-II aminoacyl-tRNA synthetase family. It depends on Zn(2+) as a cofactor.

The protein resides in the cytoplasm. The catalysed reaction is tRNA(Ala) + L-alanine + ATP = L-alanyl-tRNA(Ala) + AMP + diphosphate. Its function is as follows. Catalyzes the attachment of alanine to tRNA(Ala) in a two-step reaction: alanine is first activated by ATP to form Ala-AMP and then transferred to the acceptor end of tRNA(Ala). Also edits incorrectly charged Ser-tRNA(Ala) and Gly-tRNA(Ala) via its editing domain. The chain is Alanine--tRNA ligase from Mycoplasma genitalium (strain ATCC 33530 / DSM 19775 / NCTC 10195 / G37) (Mycoplasmoides genitalium).